Consider the following 273-residue polypeptide: MTLSNSALGKKSTYKDTYDPTLLFKIPRIDNRKELGIVNDKLPFHGVDIWNAYELSWLDKKGKPCVAIFTFFVPTTSSHIVESKSVKLYLNSFNNFVVDSMEELKRTILQDLSNNTHAEVTGEIFPINTKIEFGSPTGINIDDIDIECSEYGPPNNSLIKHEDVLVEEELNSNLLKSNCLVTGQPDWGTIIIKYKGKKLKHDALLKYLVSFRNCNEFAEQCAERIFTDIKNAINPEFLSIYIIYTRRGGIDICPYRSTDSNYTLPSSKRLIRQ.

81–83 (VES) lines the substrate pocket. An NADPH-binding site is contributed by 83–84 (SK). Cys-179 acts as the Thioimide intermediate in catalysis. The Proton donor role is filled by Asp-186. Residue 218–219 (AE) participates in substrate binding. 247–248 (RG) contacts NADPH.

Belongs to the GTP cyclohydrolase I family. QueF type 2 subfamily. As to quaternary structure, homodimer.

The protein resides in the cytoplasm. The enzyme catalyses 7-aminomethyl-7-carbaguanine + 2 NADP(+) = 7-cyano-7-deazaguanine + 2 NADPH + 3 H(+). It participates in tRNA modification; tRNA-queuosine biosynthesis. Its function is as follows. Catalyzes the NADPH-dependent reduction of 7-cyano-7-deazaguanine (preQ0) to 7-aminomethyl-7-deazaguanine (preQ1). The sequence is that of NADPH-dependent 7-cyano-7-deazaguanine reductase from Rickettsia bellii (strain OSU 85-389).